We begin with the raw amino-acid sequence, 280 residues long: MVYIHFPNNLTEEEQMLQAKYQKLKKKKKALQAHKAPKPEPESSLTLKRPTDARDAREVARKLIKSGAIPAIQKQTKQDQTSFKRPKGQERAKRSTSETTVASYQPFSSTQNDVAQETIISEIIKEEPRRQNLYQHFATERDREERGMPEKVPMDTAQPEKPRAGNTIFVSGNKVTEDFLKKTFNDYGTIVNVSMEIEKSRGFVSFAKPESADRAIAEIHGKNVNGINLQVQLARRQPQIEPINDASSSAVWSSIAASKSQKGSHKDHREMVQYDEDFLL.

Residues 25–36 show a composition bias toward basic residues; the sequence is KKKKKALQAHKA. 2 disordered regions span residues 25–112 and 141–166; these read KKKK…STQN and RDRE…RAGN. Basic and acidic residues predominate over residues 49–61; sequence RPTDARDAREVAR. Residues 73–83 show a composition bias toward polar residues; the sequence is QKQTKQDQTSF. Basic and acidic residues predominate over residues 87–96; the sequence is KGQERAKRST. Residues 97–112 show a composition bias toward polar residues; sequence SETTVASYQPFSSTQN. The segment covering 141 to 163 has biased composition (basic and acidic residues); it reads RDREERGMPEKVPMDTAQPEKPR. The RRM domain maps to 166–236; it reads NTIFVSGNKV…INLQVQLARR (71 aa).

Belongs to the RRM NELF-E family. As to quaternary structure, component of the NELF complex, which is at least composed of TH1/Nelf-D and Nelf-E.

It is found in the nucleus. It localises to the chromosome. Functionally, essential component of the NELF complex, a complex that negatively regulates the elongation of transcription by RNA polymerase II by RNA polymerase II. The NELF complex, which acts via an association with the DSIF complex, causes transcriptional pausing. The sequence is that of Negative elongation factor E (Nelf-E) from Drosophila melanogaster (Fruit fly).